The following is a 284-amino-acid chain: NH(3)-dependent NAD(+) synthetase (284 aa).

G51–S58 provides a ligand contact to ATP. D57 serves as a coordination point for Mg(2+). R148 serves as a coordination point for deamido-NAD(+). An ATP-binding site is contributed by T168. E173 contacts Mg(2+). 2 residues coordinate deamido-NAD(+): K181 and D188. The ATP site is built by K197 and T219. A deamido-NAD(+)-binding site is contributed by H268–K269.

The protein belongs to the NAD synthetase family. As to quaternary structure, homodimer.

The catalysed reaction is deamido-NAD(+) + NH4(+) + ATP = AMP + diphosphate + NAD(+) + H(+). It participates in cofactor biosynthesis; NAD(+) biosynthesis; NAD(+) from deamido-NAD(+) (ammonia route): step 1/1. Catalyzes the ATP-dependent amidation of deamido-NAD to form NAD. Uses ammonia as a nitrogen source. This chain is NH(3)-dependent NAD(+) synthetase, found in Burkholderia mallei (strain NCTC 10247).